The chain runs to 553 residues: Dihydroxy-acid dehydratase (553 aa).

D78 lines the Mg(2+) pocket. C119 contributes to the [2Fe-2S] cluster binding site. 2 residues coordinate Mg(2+): D120 and K121. Residue K121 is modified to N6-carboxylysine. Position 193 (C193) interacts with [2Fe-2S] cluster. Residue E441 coordinates Mg(2+). S467 serves as the catalytic Proton acceptor.

Belongs to the IlvD/Edd family. In terms of assembly, homodimer. [2Fe-2S] cluster is required as a cofactor. It depends on Mg(2+) as a cofactor.

The catalysed reaction is (2R)-2,3-dihydroxy-3-methylbutanoate = 3-methyl-2-oxobutanoate + H2O. The enzyme catalyses (2R,3R)-2,3-dihydroxy-3-methylpentanoate = (S)-3-methyl-2-oxopentanoate + H2O. It functions in the pathway amino-acid biosynthesis; L-isoleucine biosynthesis; L-isoleucine from 2-oxobutanoate: step 3/4. The protein operates within amino-acid biosynthesis; L-valine biosynthesis; L-valine from pyruvate: step 3/4. In terms of biological role, functions in the biosynthesis of branched-chain amino acids. Catalyzes the dehydration of (2R,3R)-2,3-dihydroxy-3-methylpentanoate (2,3-dihydroxy-3-methylvalerate) into 2-oxo-3-methylpentanoate (2-oxo-3-methylvalerate) and of (2R)-2,3-dihydroxy-3-methylbutanoate (2,3-dihydroxyisovalerate) into 2-oxo-3-methylbutanoate (2-oxoisovalerate), the penultimate precursor to L-isoleucine and L-valine, respectively. The chain is Dihydroxy-acid dehydratase from Geobacter sp. (strain M21).